The chain runs to 976 residues: Villin-2 (976 aa).

Gelsolin-like repeat units lie at residues 27-77 (FEAV…DEAG), 148-188 (IRLK…QERA), 260-302 (GKME…DERK), 399-450 (GKVK…EDQD), 531-571 (NKAV…EQLE), and 633-674 (FQVE…KEKQ). The tract at residues 769–917 (NSSSNRPAYS…SEIQPSGATF (149 aa)) is disordered. The segment covering 782–794 (RLNESHDGPRQRA) has biased composition (basic and acidic residues). Composition is skewed to low complexity over residues 795–812 (EALA…SSTK), 823–841 (SQAS…VLVA), and 848–858 (DTSPTRRSTSS). A Phosphoserine modification is found at S890. Residues 908-917 (SEIQPSGATF) show a composition bias toward polar residues. The HP domain occupies 911 to 976 (QPSGATFTYE…DLLKKKFDLF (66 aa)).

This sequence belongs to the villin/gelsolin family. In terms of tissue distribution, expressed in all tissues examined. Mainly detected in the root epidermis and vasculature. Expressed in the root cap.

It localises to the cytoplasm. Its subcellular location is the cytoskeleton. In terms of biological role, ca(2+)-regulated actin-binding protein. Involved in actin filaments bundling. Caps the barbed end of actin filaments and is able to sever them in a calcium-dependent manner. Required for the construction of actin collars in pollen tubes. Acts redundantly with VLN5 (AC Q9LVC6) to generate thick actin filament bundles and to regulate polarized pollen tube growth. Acts redundantly with VLN3 (AC O81645) to regulate directional organ growth and in sclerenchyma development. The protein is Villin-2 of Arabidopsis thaliana (Mouse-ear cress).